Consider the following 345-residue polypeptide: Protein RecA (345 aa).

Position 65 to 72 (G65 to T72) interacts with ATP.

This sequence belongs to the RecA family.

It localises to the cytoplasm. Can catalyze the hydrolysis of ATP in the presence of single-stranded DNA, the ATP-dependent uptake of single-stranded DNA by duplex DNA, and the ATP-dependent hybridization of homologous single-stranded DNAs. It interacts with LexA causing its activation and leading to its autocatalytic cleavage. In Hahella chejuensis (strain KCTC 2396), this protein is Protein RecA.